The primary structure comprises 242 residues: Ras-like protein family member 11A (242 aa).

Positions E17–L241 are small GTPase-like. Residues G34–S41, D81–A88, and N147–D150 each bind GTP.

It belongs to the small GTPase superfamily. Ras family. In terms of assembly, interacts with UBF/UBTF.

It localises to the nucleus. The protein localises to the nucleolus. The enzyme catalyses GTP + H2O = GDP + phosphate + H(+). Functionally, regulator of rDNA transcription. Acts in cooperation UBF/UBTF and positively regulates RNA polymerase I transcription. The chain is Ras-like protein family member 11A from Mus musculus (Mouse).